The sequence spans 701 residues: Ephexin-1 (701 aa).

2 stretches are compositionally biased toward basic and acidic residues: residues 1-11 and 26-48; these read METKNSEDQGK and GPAE…EEPR. Residues 1 to 141 form a disordered region; sequence METKNSEDQG…TPEECPALTD (141 aa). The segment at 1 to 264 is regulatory region; modulates activity toward RHOA, RAC1 and CDC42; that stretch reads METKNSEDQG…LDILQPEETK (264 aa). Positions 120–132 are enriched in polar residues; sequence ASESSSTPGNGTT. Residue Tyr-172 is modified to Phosphotyrosine. Residues 187–226 form a disordered region; sequence RRQQDAEIQGNSDGSQAGEDNAEEEEEEEEEPASPPERRA. Over residues 206-218 the composition is skewed to acidic residues; it reads DNAEEEEEEEEEP. Residues 264-448 form the DH domain; that stretch reads KLQEAMFELV…EMVVKACNEG (185 aa). The 113-residue stretch at 480–592 folds into the PH domain; that stretch reads WLLKQGELQQ…WMTSLAPNRR (113 aa). The region spanning 603 to 664 is the SH3 domain; sequence LDCPQVQCVH…PSSMTEEILN (62 aa). The span at 679–690 shows a compositional bias: basic and acidic residues; that stretch reads HKMEDPQRSQNK. Residues 679-701 are disordered; sequence HKMEDPQRSQNKDRRKLGSRNRQ. Over residues 691–701 the composition is skewed to basic residues; sequence DRRKLGSRNRQ.

As to quaternary structure, interacts with CDK5R1 and EPHA4; activated by EPHA4 through the CDK5 kinase. In terms of processing, phosphorylation by CDK5 upon EPHA4 activation by EFNA1 may regulate dendritic spine morphogenesis. Src-dependent phosphorylation at Tyr-172 upon EPHA4 activation increases the guanine exchange factor activity toward RHOA. Expressed in telencephalic neurons (at protein level). Expressed in brain, spinal cord and testis.

The protein resides in the cytoplasm. It localises to the membrane. It is found in the cell projection. The protein localises to the growth cone. Acts as a guanine nucleotide exchange factor (GEF) which differentially activates the GTPases RHOA, RAC1 and CDC42. Plays a role in axon guidance regulating ephrin-induced growth cone collapse and dendritic spine morphogenesis. Upon activation by ephrin through EPHA4, the GEF activity switches toward RHOA resulting in its activation. Activated RHOA promotes cone retraction at the expense of RAC1- and CDC42-stimulated growth cone extension. The polypeptide is Ephexin-1 (Ngef) (Rattus norvegicus (Rat)).